A 1242-amino-acid polypeptide reads, in one-letter code: von Willebrand factor A domain-containing protein 5B2 (1242 aa).

A VIT domain is found at 1–138 (MPGLYCPSSW…TMTVTLHSSR (138 aa)). A VWFA domain is found at 354 to 527 (ELLFLLDSSS…KALEPALSDI (174 aa)). 6 disordered regions span residues 569–650 (SRPP…SDTA), 670–726 (CSAS…CPLP), 751–794 (LAGR…GQGL), 957–976 (CSSE…SHLD), 987–1055 (KGLQ…GSDH), and 1118–1159 (QGDS…GLGG). Low complexity predominate over residues 588 to 604 (PSPEEAPSAASPGTEPT). A compositionally biased stretch (polar residues) spans 605 to 619 (GTSEPLGTGTVSAEL). Over residues 681–700 (TGSSESPGSQGPGSPEGSAP) the composition is skewed to low complexity. Residues 1125–1138 (SCSPSPSSGSEGPG) are compositionally biased toward low complexity.

The polypeptide is von Willebrand factor A domain-containing protein 5B2 (VWA5B2) (Homo sapiens (Human)).